Reading from the N-terminus, the 156-residue chain is 6,7-dimethyl-8-ribityllumazine synthase (156 aa).

Residues Phe23, 57–59 (AYE), and 81–83 (AII) contribute to the 5-amino-6-(D-ribitylamino)uracil site. 86–87 (GT) is a (2S)-2-hydroxy-3-oxobutyl phosphate binding site. Residue His89 is the Proton donor of the active site. Phe114 lines the 5-amino-6-(D-ribitylamino)uracil pocket. Position 128 (Arg128) interacts with (2S)-2-hydroxy-3-oxobutyl phosphate.

Belongs to the DMRL synthase family.

The catalysed reaction is (2S)-2-hydroxy-3-oxobutyl phosphate + 5-amino-6-(D-ribitylamino)uracil = 6,7-dimethyl-8-(1-D-ribityl)lumazine + phosphate + 2 H2O + H(+). It participates in cofactor biosynthesis; riboflavin biosynthesis; riboflavin from 2-hydroxy-3-oxobutyl phosphate and 5-amino-6-(D-ribitylamino)uracil: step 1/2. Catalyzes the formation of 6,7-dimethyl-8-ribityllumazine by condensation of 5-amino-6-(D-ribitylamino)uracil with 3,4-dihydroxy-2-butanone 4-phosphate. This is the penultimate step in the biosynthesis of riboflavin. This chain is 6,7-dimethyl-8-ribityllumazine synthase, found in Helicobacter pylori (strain HPAG1).